A 260-amino-acid polypeptide reads, in one-letter code: Hemin import ATP-binding protein HmuV (260 aa).

One can recognise an ABC transporter domain in the interval 7-243; the sequence is IQASNISVTF…ERIEQVYGYS (237 aa). 39–46 contributes to the ATP binding site; that stretch reads GPNGAGKS.

It belongs to the ABC transporter superfamily. Heme (hemin) importer (TC 3.A.1.14.5) family. The complex is composed of two ATP-binding proteins (HmuV), two transmembrane proteins (HmuU) and a solute-binding protein (HmuT).

The protein resides in the cell inner membrane. In terms of biological role, part of the ABC transporter complex HmuTUV involved in hemin import. Responsible for energy coupling to the transport system. This chain is Hemin import ATP-binding protein HmuV, found in Vibrio anguillarum (strain ATCC 68554 / 775) (Listonella anguillarum).